The following is a 208-amino-acid chain: MTNKDESVEKNTESTVEVTNVKQNIDDSVEQTEESKGHLQDEAIEETSDENVIEEIDPKDQKINELQQLADENEEKYLRLYAEFENYKRRIQKENEINKTYQAQRVLTDILPAIDNIERALQIEGDDETFKSLQKGVQMVHESLINALKDNGLEVIKTEGEAFDPNIHQAVVQDDNPDFESGEITQELQKGYKLKDRVLRPSMVKVNQ.

Residues 1 to 12 (MTNKDESVEKNT) are compositionally biased toward basic and acidic residues. The segment at 1–49 (MTNKDESVEKNTESTVEVTNVKQNIDDSVEQTEESKGHLQDEAIEETSD) is disordered. The segment covering 13–23 (ESTVEVTNVKQ) has biased composition (polar residues).

This sequence belongs to the GrpE family. As to quaternary structure, homodimer.

The protein localises to the cytoplasm. Functionally, participates actively in the response to hyperosmotic and heat shock by preventing the aggregation of stress-denatured proteins, in association with DnaK and GrpE. It is the nucleotide exchange factor for DnaK and may function as a thermosensor. Unfolded proteins bind initially to DnaJ; upon interaction with the DnaJ-bound protein, DnaK hydrolyzes its bound ATP, resulting in the formation of a stable complex. GrpE releases ADP from DnaK; ATP binding to DnaK triggers the release of the substrate protein, thus completing the reaction cycle. Several rounds of ATP-dependent interactions between DnaJ, DnaK and GrpE are required for fully efficient folding. The protein is Protein GrpE of Staphylococcus aureus (strain bovine RF122 / ET3-1).